The following is a 449-amino-acid chain: UDP-N-acetylmuramate--L-alanine ligase (449 aa).

118-124 contacts ATP; it reads GTHGKTT.

Belongs to the MurCDEF family.

It is found in the cytoplasm. It catalyses the reaction UDP-N-acetyl-alpha-D-muramate + L-alanine + ATP = UDP-N-acetyl-alpha-D-muramoyl-L-alanine + ADP + phosphate + H(+). It functions in the pathway cell wall biogenesis; peptidoglycan biosynthesis. In terms of biological role, cell wall formation. In Flavobacterium johnsoniae (strain ATCC 17061 / DSM 2064 / JCM 8514 / BCRC 14874 / CCUG 350202 / NBRC 14942 / NCIMB 11054 / UW101) (Cytophaga johnsonae), this protein is UDP-N-acetylmuramate--L-alanine ligase.